The chain runs to 282 residues: Phosphatidylglycerol--prolipoprotein diacylglyceryl transferase (282 aa).

The next 3 helical transmembrane spans lie at 18 to 38 (IQVH…VALA), 56 to 76 (ILWA…IFQW), and 89 to 109 (IWDG…VVIL). Residue Arg137 participates in a 1,2-diacyl-sn-glycero-3-phospho-(1'-sn-glycerol) binding. The chain crosses the membrane as a helical span at residues 237–257 (VIRVSQALSVVLFFGSIGLMI).

The protein belongs to the Lgt family.

It localises to the cell membrane. The catalysed reaction is L-cysteinyl-[prolipoprotein] + a 1,2-diacyl-sn-glycero-3-phospho-(1'-sn-glycerol) = an S-1,2-diacyl-sn-glyceryl-L-cysteinyl-[prolipoprotein] + sn-glycerol 1-phosphate + H(+). The protein operates within protein modification; lipoprotein biosynthesis (diacylglyceryl transfer). Its function is as follows. Catalyzes the transfer of the diacylglyceryl group from phosphatidylglycerol to the sulfhydryl group of the N-terminal cysteine of a prolipoprotein, the first step in the formation of mature lipoproteins. This chain is Phosphatidylglycerol--prolipoprotein diacylglyceryl transferase, found in Lactiplantibacillus plantarum (strain ATCC BAA-793 / NCIMB 8826 / WCFS1) (Lactobacillus plantarum).